A 277-amino-acid polypeptide reads, in one-letter code: Protein OPG166 (277 aa).

Asn29 and Asn58 each carry an N-linked (GlcNAc...) asparagine; by host glycan. Helical transmembrane passes span 124–144 (TMLM…EIAY), 156–176 (GILQ…AFLF), 186–206 (IIGL…KVFS), 219–239 (LIIY…GLSL), and 247–267 (LLLS…LFLV).

The protein belongs to the orthopoxvirus OPG166 protein family.

It is found in the host membrane. Functionally, promotes, when overexpressed, the influx of extracellular Ca(2+), leading to membrane permeability and host cell necrosis. In Variola virus (isolate Human/India/Ind3/1967) (VARV), this protein is Protein OPG166 (OPG166).